Here is a 316-residue protein sequence, read N- to C-terminus: Protoheme IX farnesyltransferase (316 aa).

9 consecutive transmembrane segments (helical) span residues 32–52 (VMSL…GHIN), 53–73 (PVLG…SGAL), 93–113 (IPAG…LSGF), 116–136 (VILG…TIFF), 152–172 (NIVI…ACVT), 180–200 (TVLF…LALF), 221–241 (VTKH…VLPS), 252–271 (LVAA…VWRM), and 289–309 (IFYL…AILV).

It belongs to the UbiA prenyltransferase family. Protoheme IX farnesyltransferase subfamily.

It localises to the cell inner membrane. The enzyme catalyses heme b + (2E,6E)-farnesyl diphosphate + H2O = Fe(II)-heme o + diphosphate. It participates in porphyrin-containing compound metabolism; heme O biosynthesis; heme O from protoheme: step 1/1. Functionally, converts heme B (protoheme IX) to heme O by substitution of the vinyl group on carbon 2 of heme B porphyrin ring with a hydroxyethyl farnesyl side group. This chain is Protoheme IX farnesyltransferase, found in Rhizobium etli (strain ATCC 51251 / DSM 11541 / JCM 21823 / NBRC 15573 / CFN 42).